An 80-amino-acid chain; its full sequence is Anaphase-promoting complex subunit hcn1 (80 aa).

An N-acetylmethionine modification is found at M1. Positions Q26–I54 are disordered. Positions A37–I54 are enriched in basic and acidic residues.

The APC/C is composed of at least 13 subunits: apc1, apc2, nuc2, apc4, apc5, cut9, apc8, apc10, apc11, hcn1, apc13, apc14 and apc15. Interacts directly (via N-terminus) with cut9.

Its function is as follows. Component of the anaphase promoting complex/cyclosome (APC/C), a cell cycle-regulated E3 ubiquitin-protein ligase complex that controls progression through mitosis and the G1 phase of the cell cycle. The APC/C is thought to confer substrate specificity and, in the presence of ubiquitin-conjugating E2 enzymes, it catalyzes the formation of protein-ubiquitin conjugates that are subsequently degraded by the 26S proteasome. Has a role in assembling cut9 in the 20S APC/cyclosome. This Schizosaccharomyces pombe (strain 972 / ATCC 24843) (Fission yeast) protein is Anaphase-promoting complex subunit hcn1 (hcn1).